A 139-amino-acid chain; its full sequence is Large-conductance mechanosensitive channel (139 aa).

Transmembrane regions (helical) follow at residues 16–36 and 83–103; these read VIDL…VDSL and GQFI…FVAV.

It belongs to the MscL family. As to quaternary structure, homopentamer.

The protein resides in the cell inner membrane. Functionally, channel that opens in response to stretch forces in the membrane lipid bilayer. May participate in the regulation of osmotic pressure changes within the cell. This is Large-conductance mechanosensitive channel from Aromatoleum aromaticum (strain DSM 19018 / LMG 30748 / EbN1) (Azoarcus sp. (strain EbN1)).